The sequence spans 533 residues: Beta-apo-4'-carotenal oxygenase (533 aa).

Catalysis depends on residues E226 and C260.

Belongs to the aldehyde dehydrogenase family.

It catalyses the reaction 4'-apo-beta-carotenal + NAD(+) + H2O = neurosporaxanthin + NADH + 2 H(+). Functionally, beta-apo-4'-carotenal oxygenase involved in the last step of synthesis of neurosporaxanthin, a carboxylic apocarotenoid acting as an essential protective pigment and leading to orange pigmentation. Converts the aldehyde beta-apo-4'-carotenal into neurosporaxanthin. Neurosporaxanthin is synthesized from geranyl-geranyl pyrophosphate (GGPP) through several enzymatic activities. Phytoene synthase activity performed by the bifunctional enzyme al-2 first produces phytoene from geranyl-geranyl pyrophosphate (GGPP). The phytoene dehydrogenase al-1 then introduces 5 desaturations to lead to 3,4-didehydrolycopene via the intermediates phytofluene, zeta-carotene, neurosporene and lycopene. Al-2 cyclase activity then converts 3,4-didehydrolycopene into torulene. Al-2 can also convet lycopene into gamma-carotene which in turn is converted to beta-carotene by an additional al-2 cyclization reaction. Torulene is the substrate of the dioxidase cao-2 that breaks the molecule, removing five carbon atoms to yield beta-apo-4'-carotenal, whereas the aldehyde dehydrogenase ylo-1 mediates the last step by converting beta-apo-4'-carotenal into neurosporaxanthin. The polypeptide is Beta-apo-4'-carotenal oxygenase (Neurospora crassa (strain ATCC 24698 / 74-OR23-1A / CBS 708.71 / DSM 1257 / FGSC 987)).